A 303-amino-acid chain; its full sequence is Glycine--tRNA ligase alpha subunit (303 aa).

It belongs to the class-II aminoacyl-tRNA synthetase family. In terms of assembly, tetramer of two alpha and two beta subunits.

The protein localises to the cytoplasm. It carries out the reaction tRNA(Gly) + glycine + ATP = glycyl-tRNA(Gly) + AMP + diphosphate. This chain is Glycine--tRNA ligase alpha subunit, found in Cronobacter sakazakii (strain ATCC BAA-894) (Enterobacter sakazakii).